The following is a 479-amino-acid chain: Ribosomal RNA small subunit methyltransferase F (479 aa).

Residues 125–131 (AAAPGSK), Glu-149, Asp-176, and Asp-194 contribute to the S-adenosyl-L-methionine site. Cys-247 acts as the Nucleophile in catalysis.

This sequence belongs to the class I-like SAM-binding methyltransferase superfamily. RsmB/NOP family.

Its subcellular location is the cytoplasm. It catalyses the reaction cytidine(1407) in 16S rRNA + S-adenosyl-L-methionine = 5-methylcytidine(1407) in 16S rRNA + S-adenosyl-L-homocysteine + H(+). In terms of biological role, specifically methylates the cytosine at position 1407 (m5C1407) of 16S rRNA. The chain is Ribosomal RNA small subunit methyltransferase F from Escherichia coli (strain SMS-3-5 / SECEC).